The chain runs to 264 residues: Diphthine synthase (264 aa).

Residues L10, D87, V90, 115 to 116 (SI), L166, A209, and H234 contribute to the S-adenosyl-L-methionine site.

This sequence belongs to the diphthine synthase family. Homodimer.

The enzyme catalyses 2-[(3S)-amino-3-carboxypropyl]-L-histidyl-[translation elongation factor 2] + 3 S-adenosyl-L-methionine = diphthine-[translation elongation factor 2] + 3 S-adenosyl-L-homocysteine + 3 H(+). It functions in the pathway protein modification; peptidyl-diphthamide biosynthesis. Its function is as follows. S-adenosyl-L-methionine-dependent methyltransferase that catalyzes the trimethylation of the amino group of the modified target histidine residue in translation elongation factor 2 (EF-2), to form an intermediate called diphthine. The three successive methylation reactions represent the second step of diphthamide biosynthesis. The sequence is that of Diphthine synthase from Thermococcus kodakarensis (strain ATCC BAA-918 / JCM 12380 / KOD1) (Pyrococcus kodakaraensis (strain KOD1)).